The chain runs to 80 residues: Exodeoxyribonuclease 7 small subunit (80 aa).

This sequence belongs to the XseB family. As to quaternary structure, heterooligomer composed of large and small subunits.

It localises to the cytoplasm. The enzyme catalyses Exonucleolytic cleavage in either 5'- to 3'- or 3'- to 5'-direction to yield nucleoside 5'-phosphates.. Bidirectionally degrades single-stranded DNA into large acid-insoluble oligonucleotides, which are then degraded further into small acid-soluble oligonucleotides. The chain is Exodeoxyribonuclease 7 small subunit from Oleidesulfovibrio alaskensis (strain ATCC BAA-1058 / DSM 17464 / G20) (Desulfovibrio alaskensis).